A 788-amino-acid polypeptide reads, in one-letter code: Endonuclease MutS2 (788 aa).

Residue 332–339 (GPNTGGKT) coordinates ATP. The 76-residue stretch at 713 to 788 (VDLRGMDAEE…GTGVTVVELK (76 aa)) folds into the Smr domain.

The protein belongs to the DNA mismatch repair MutS family. MutS2 subfamily. In terms of assembly, homodimer. Binds to stalled ribosomes, contacting rRNA.

In terms of biological role, endonuclease that is involved in the suppression of homologous recombination and thus may have a key role in the control of bacterial genetic diversity. Acts as a ribosome collision sensor, splitting the ribosome into its 2 subunits. Detects stalled/collided 70S ribosomes which it binds and splits by an ATP-hydrolysis driven conformational change. Acts upstream of the ribosome quality control system (RQC), a ribosome-associated complex that mediates the extraction of incompletely synthesized nascent chains from stalled ribosomes and their subsequent degradation. Probably generates substrates for RQC. This Clostridium botulinum (strain Okra / Type B1) protein is Endonuclease MutS2.